Reading from the N-terminus, the 275-residue chain is DNA polymerase II subunit B4 (275 aa).

Residues 11–17 mediate DNA binding; sequence LPLAIVR. Positions 112-122 are enriched in low complexity; sequence ASYPAGGAALK. The disordered stretch occupies residues 112–275; that stretch reads ASYPAGGAAL…EEVESDEEDE (164 aa). The Nuclear localization signal signature appears at 135–142; that stretch reads KKRKQEEP. The span at 151–161 shows a compositional bias: basic and acidic residues; sequence SKIDEETKRND. Residues 152-179 are a coiled coil; it reads KIDEETKRNDEETENDNTEEENGNDEED. Acidic residues-rich tracts occupy residues 162 to 237 and 266 to 275; these read EETE…EESG and EEVESDEEDE.

Belongs to the NFYB/HAP3 subunit family. As to quaternary structure, heterotrimeric transcription factor composed of three components, NF-YA, NF-YB and NF-YC. NF-YB and NF-YC must interact and dimerize for NF-YA association and DNA binding. Binds directly with DPB3-1.

It localises to the nucleus. Its function is as follows. Component of the NF-Y/HAP transcription factor complex. The NF-Y complex stimulates the transcription of various genes by recognizing and binding to a CCAAT motif in promoters. This chain is DNA polymerase II subunit B4, found in Arabidopsis thaliana (Mouse-ear cress).